The chain runs to 699 residues: tRNA wybutosine-synthesizing protein 4 (699 aa).

S-adenosyl-L-methionine-binding positions include Arg94, Gly120, Asp151, 197-198 (DL), and Glu224.

This sequence belongs to the methyltransferase superfamily. LCMT family.

It carries out the reaction 7-[(3S)-3-amino-3-carboxypropyl]wyosine(37) in tRNA(Phe) + S-adenosyl-L-methionine = 7-[(3S)-(3-amino-3-methoxycarbonyl)propyl]wyosine(37) in tRNA(Phe) + S-adenosyl-L-homocysteine. It catalyses the reaction 7-[(3S)-(3-amino-3-methoxycarbonyl)propyl]wyosine(37) in tRNA(Phe) + S-adenosyl-L-methionine + CO2 = wybutosine(37) in tRNA(Phe) + S-adenosyl-L-homocysteine + 2 H(+). It functions in the pathway tRNA modification; wybutosine-tRNA(Phe) biosynthesis. Probable S-adenosyl-L-methionine-dependent methyltransferase that acts as a component of the wybutosine biosynthesis pathway. Wybutosine is a hyper modified guanosine with a tricyclic base found at the 3'-position adjacent to the anticodon of eukaryotic phenylalanine tRNA. May methylate the carboxyl group of leucine residues to form alpha-leucine ester residues. The polypeptide is tRNA wybutosine-synthesizing protein 4 (PPM2) (Eremothecium gossypii (strain ATCC 10895 / CBS 109.51 / FGSC 9923 / NRRL Y-1056) (Yeast)).